Reading from the N-terminus, the 176-residue chain is ATP-dependent protease subunit HslV (176 aa).

Residue Thr2 is part of the active site. Na(+) contacts are provided by Gly157, Cys160, and Thr163.

Belongs to the peptidase T1B family. HslV subfamily. A double ring-shaped homohexamer of HslV is capped on each side by a ring-shaped HslU homohexamer. The assembly of the HslU/HslV complex is dependent on binding of ATP.

Its subcellular location is the cytoplasm. It catalyses the reaction ATP-dependent cleavage of peptide bonds with broad specificity.. With respect to regulation, allosterically activated by HslU binding. Its function is as follows. Protease subunit of a proteasome-like degradation complex believed to be a general protein degrading machinery. The protein is ATP-dependent protease subunit HslV of Pectobacterium atrosepticum (strain SCRI 1043 / ATCC BAA-672) (Erwinia carotovora subsp. atroseptica).